The following is a 139-amino-acid chain: MTVHCDIVSAEGEIFSGLVEMVIAHGNLGDIGIAPGHAPLITDLKPGPIRLIKQGGEAEVFYISGGFLEVQPNMVKVLADTVQRAADLDEASAQAAVKAAEKALNEKGADFDYGSATARLAEAAAQLRTVQQIRKKFGG.

The protein belongs to the ATPase epsilon chain family. In terms of assembly, F-type ATPases have 2 components, CF(1) - the catalytic core - and CF(0) - the membrane proton channel. CF(1) has five subunits: alpha(3), beta(3), gamma(1), delta(1), epsilon(1). CF(0) has three main subunits: a, b and c.

The protein resides in the cell inner membrane. In terms of biological role, produces ATP from ADP in the presence of a proton gradient across the membrane. The protein is ATP synthase epsilon chain of Pseudomonas syringae pv. tomato (strain ATCC BAA-871 / DC3000).